The following is a 529-amino-acid chain: Putative inorganic phosphate cotransporter (529 aa).

8 helical membrane passes run 37 to 57, 110 to 130, 148 to 168, 202 to 222, 232 to 252, 338 to 358, 429 to 449, and 466 to 486; these read FATR…AYVM, YILS…GILA, VFAF…LCAV, AVYA…GLLA, SIFY…LIFV, LPYL…DWMI, FLMS…PIAA, and IVFF…NIFG. The interval 495–529 is disordered; that stretch reads NPEDDEQKPALQTTVTTSPARLSNGSTAPAAISSS. Polar residues predominate over residues 504 to 529; sequence ALQTTVTTSPARLSNGSTAPAAISSS.

This sequence belongs to the major facilitator superfamily. Sodium/anion cotransporter family.

Its subcellular location is the membrane. Functionally, may be an inorganic phosphate cotransporter. In Drosophila melanogaster (Fruit fly), this protein is Putative inorganic phosphate cotransporter (Picot).